The primary structure comprises 899 residues: MADPPDANVPKTSPYLKGDELSSDSGPLLSIFALQEIMQKVRQAQSEYVAATKDVDLTVPDVQKIIDGVKELASETIYKIVQKPIISYRHVVMQSRDRFLRVDTYYERMSEVGDKIDENEPAKFYETVIKKVRHLRTEGAFILHNIPTKDHRGMEIADPEILGVDVKSILPVLTAEHRAMIQHVLDGAIIENGNIATRDVDVYLGACSESVYRIYNRLQGYIEAVQLEELRRTVTWLERLGKRKRMTFSQEFLTDFRRVDTIWVLALRLPANPRVIWDVPRCSIANLIMNIATCLPTGDMFRPNPRIASITLTQRITTTGPFAILTGSTPTAQQLDDVRKIYLALMFPGQIILDLKIDPGERMDPAVRMVAGVVGHLMFTAGPRFTNITQNMARQLDIALADFLLYMYNTRIQVQYGPTGEPLDFRIGRGQYDCNVFRANFQTGTGYNGWGLVDVENREPAPYDHAQRYIRYCNIDSRELIHPATFGIGMNYHCYNEMLRMLVAAGKDTEAAFFRNMLPFHMVRFARINQVINEDLHSAFSMPDDQFNVLLANMVVGQQERVDPVILDISWISIWYAFNRSFEPIRRNEMLESAPLIESVYASELTVMKTDMQQMALLQRRFPDVLIEARPTHFWKAVMEVSPEPVRAIMDLAHSHSFINIRDMMRWIGLPSMQNSMKLVLEEEAWAVANDFEELMLTDQVYMYRDMLPEPRLDDIERFRQEGFYYTNMLDGPPAIDRVVQYTYEVARFEANMGQLRAALRRIMDDERWVRFGGVLRTVRIKFFDSRPPEEILQALPFDYQTNEKGGLTYATIKYANDTTIYYLIYNVEYSNLPDSLVLINPTYVMTKVFMNKRIVERVRVGQALAVMNKRFIAFKGKMRIMDISQALKVGTKLAAPTV.

Residues 1 to 21 are disordered; that stretch reads MADPPDANVPKTSPYLKGDEL.

The protein belongs to the orbivirus VP3 family.

The protein localises to the virion. The VP3 protein is one of the five proteins (with VP1, VP4, VP6 and VP7) which form the inner capsid of the virus. This is Core protein VP3 (Segment-3) from Epizootic hemorrhagic disease virus 1 (EHDV-1).